A 464-amino-acid chain; its full sequence is Protein FAM90A14 (464 aa).

Disordered stretches follow at residues 1–42, 70–389, and 411–437; these read MMAR…DPRL, PATL…HDGA, and APSF…SEAP. Basic and acidic residues-rich tracts occupy residues 74–89 and 97–114; these read GKKE…KPRV and NKDK…DPQR. Residues 180–197 show a composition bias toward low complexity; the sequence is LASLSPLRKASLSSSSSL.

Belongs to the FAM90 family.

In Homo sapiens (Human), this protein is Protein FAM90A14.